Here is a 165-residue protein sequence, read N- to C-terminus: 6,7-dimethyl-8-ribityllumazine synthase (165 aa).

5-amino-6-(D-ribitylamino)uracil is bound by residues F22, 56 to 58 (SME), and 80 to 82 (AVI). 85-86 (ET) is a (2S)-2-hydroxy-3-oxobutyl phosphate binding site. Residue H88 is the Proton donor of the active site. A 5-amino-6-(D-ribitylamino)uracil-binding site is contributed by F113. A (2S)-2-hydroxy-3-oxobutyl phosphate-binding site is contributed by R127.

The protein belongs to the DMRL synthase family.

The catalysed reaction is (2S)-2-hydroxy-3-oxobutyl phosphate + 5-amino-6-(D-ribitylamino)uracil = 6,7-dimethyl-8-(1-D-ribityl)lumazine + phosphate + 2 H2O + H(+). Its pathway is cofactor biosynthesis; riboflavin biosynthesis; riboflavin from 2-hydroxy-3-oxobutyl phosphate and 5-amino-6-(D-ribitylamino)uracil: step 1/2. Catalyzes the formation of 6,7-dimethyl-8-ribityllumazine by condensation of 5-amino-6-(D-ribitylamino)uracil with 3,4-dihydroxy-2-butanone 4-phosphate. This is the penultimate step in the biosynthesis of riboflavin. The protein is 6,7-dimethyl-8-ribityllumazine synthase of Thermotoga sp. (strain RQ2).